Here is a 279-residue protein sequence, read N- to C-terminus: Biotin synthase (279 aa).

Residues 2–228 (KTIMLCAICS…ETRVMIAGGR (227 aa)) enclose the Radical SAM core domain. [4Fe-4S] cluster-binding residues include C17, C21, and C24. 4 residues coordinate [2Fe-2S] cluster: C61, C96, C154, and R221.

This sequence belongs to the radical SAM superfamily. Biotin synthase family. Homodimer. [4Fe-4S] cluster serves as cofactor. [2Fe-2S] cluster is required as a cofactor.

The catalysed reaction is (4R,5S)-dethiobiotin + (sulfur carrier)-SH + 2 reduced [2Fe-2S]-[ferredoxin] + 2 S-adenosyl-L-methionine = (sulfur carrier)-H + biotin + 2 5'-deoxyadenosine + 2 L-methionine + 2 oxidized [2Fe-2S]-[ferredoxin]. It participates in cofactor biosynthesis; biotin biosynthesis; biotin from 7,8-diaminononanoate: step 2/2. Functionally, catalyzes the conversion of dethiobiotin (DTB) to biotin by the insertion of a sulfur atom into dethiobiotin via a radical-based mechanism. The chain is Biotin synthase from Campylobacter concisus (strain 13826).